A 100-amino-acid chain; its full sequence is Protein RnfH (100 aa).

The protein belongs to the UPF0125 (RnfH) family.

The chain is Protein RnfH from Pseudomonas paraeruginosa (strain DSM 24068 / PA7) (Pseudomonas aeruginosa (strain PA7)).